Consider the following 222-residue polypeptide: UPF0758 protein YPN_3801 (222 aa).

The region spanning 100 to 222 (VLLNPGITQK…CVSFAERGWL (123 aa)) is the MPN domain. Positions 171, 173, and 184 each coordinate Zn(2+). The JAMM motif motif lies at 171 to 184 (HNHPSGKAEPSQAD).

It belongs to the UPF0758 family. YicR subfamily.

The polypeptide is UPF0758 protein YPN_3801 (Yersinia pestis bv. Antiqua (strain Nepal516)).